Reading from the N-terminus, the 108-residue chain is Colipase B (108 aa).

The first 13 residues, 1-13 (LALLLVALAVAYA), serve as a signal peptide directing secretion. Positions 14–18 (VPDPR) are cleaved as a propeptide — enterostatin, activation peptide. Cystine bridges form between cysteine 30–cysteine 41, cysteine 36–cysteine 52, cysteine 40–cysteine 74, cysteine 62–cysteine 82, and cysteine 76–cysteine 100. Tryptophan 65 is a taurodeoxycholate binding site.

It belongs to the colipase family. As to quaternary structure, forms a 1:1 stoichiometric complex with pancreatic lipase. Expressed by the pancreas.

The protein resides in the secreted. In terms of biological role, colipase is a cofactor of pancreatic lipase. It allows the lipase to anchor itself to the lipid-water interface. Without colipase the enzyme is washed off by bile salts, which have an inhibitory effect on the lipase. Its function is as follows. Enterostatin has a biological activity as a satiety signal. This Equus caballus (Horse) protein is Colipase B (CLPS2).